The chain runs to 645 residues: DNA ligase (645 aa).

NAD(+) contacts are provided by residues 30-34, 79-80, and glutamate 106; these read DIEYD and SM. Lysine 108 (N6-AMP-lysine intermediate) is an active-site residue. NAD(+) contacts are provided by arginine 129, glutamate 163, and lysine 302. Zn(2+) is bound by residues cysteine 396, cysteine 399, cysteine 412, and cysteine 417. The region spanning 570–645 is the BRCT domain; it reads ISQNVFTKKT…ISEDEFKEML (76 aa).

The protein belongs to the NAD-dependent DNA ligase family. LigA subfamily. Requires Mg(2+) as cofactor. Mn(2+) is required as a cofactor.

It catalyses the reaction NAD(+) + (deoxyribonucleotide)n-3'-hydroxyl + 5'-phospho-(deoxyribonucleotide)m = (deoxyribonucleotide)n+m + AMP + beta-nicotinamide D-nucleotide.. Functionally, DNA ligase that catalyzes the formation of phosphodiester linkages between 5'-phosphoryl and 3'-hydroxyl groups in double-stranded DNA using NAD as a coenzyme and as the energy source for the reaction. It is essential for DNA replication and repair of damaged DNA. In Campylobacter hominis (strain ATCC BAA-381 / DSM 21671 / CCUG 45161 / LMG 19568 / NCTC 13146 / CH001A), this protein is DNA ligase.